We begin with the raw amino-acid sequence, 52 residues long: UPF0391 membrane protein ABAYE0050 (52 aa).

The next 2 membrane-spanning stretches (helical) occupy residues Ile6 to Leu26 and Phe30 to Gly50.

It belongs to the UPF0391 family.

The protein localises to the cell membrane. The sequence is that of UPF0391 membrane protein ABAYE0050 from Acinetobacter baumannii (strain AYE).